The sequence spans 152 residues: MVKAVVVLSSSEGVSGTVQFTQEGSGPTTVTGNVSGLRPGLHGFHVHALGDTTNGCMSTGPHFNPAGKEHGAPEDETRHAGDLGNITVGDDGTATFTIIDSQIPLTGPNSIVGRAVVVHADPDDLGRGGHELSKATGNAGGRVACGVIGLQG.

Residues His45, His47, and His62 each coordinate Cu cation. A disulfide bridge links Cys56 with Cys145. Zn(2+) contacts are provided by His62, His70, His79, and Asp82. Residue His119 coordinates Cu cation.

Belongs to the Cu-Zn superoxide dismutase family. In terms of assembly, homodimer. The cofactor is Cu cation. It depends on Zn(2+) as a cofactor.

It localises to the cytoplasm. The enzyme catalyses 2 superoxide + 2 H(+) = H2O2 + O2. Functionally, destroys radicals which are normally produced within the cells and which are toxic to biological systems. The chain is Superoxide dismutase [Cu-Zn] 1 (SODCC.1) from Mesembryanthemum crystallinum (Common ice plant).